The following is a 475-amino-acid chain: Luvungin A synthase CYP716AC1 (475 aa).

Residues 3 to 23 (FIILSLLLLSLALYSLYYVII) traverse the membrane as a helical segment. Cys-423 contributes to the heme binding site.

Belongs to the cytochrome P450 family. Heme is required as a cofactor. Expressed in flowers, maturing fruits and in juice vesicles.

The protein resides in the membrane. It catalyses the reaction (21S)-21-acetoxyl-apo-melianone + reduced [NADPH--hemoprotein reductase] + O2 = luvungin A + oxidized [NADPH--hemoprotein reductase] + H2O + H(+). It functions in the pathway secondary metabolite biosynthesis; terpenoid biosynthesis. Its function is as follows. Monooxygenase involved in the biosynthesis of limonoids triterpene natural products such as limonin, a compound with insecticidal activity responsible for the bitter taste in citrus. Catalyzes the conversion of (21S)-21-acetoxyl-apo-melianone to luvungin A. In Citrus sinensis (Sweet orange), this protein is Luvungin A synthase CYP716AC1.